Consider the following 341-residue polypeptide: S-adenosylmethionine:tRNA ribosyltransferase-isomerase (341 aa).

The protein belongs to the QueA family. As to quaternary structure, monomer.

It localises to the cytoplasm. It catalyses the reaction 7-aminomethyl-7-carbaguanosine(34) in tRNA + S-adenosyl-L-methionine = epoxyqueuosine(34) in tRNA + adenine + L-methionine + 2 H(+). It functions in the pathway tRNA modification; tRNA-queuosine biosynthesis. Transfers and isomerizes the ribose moiety from AdoMet to the 7-aminomethyl group of 7-deazaguanine (preQ1-tRNA) to give epoxyqueuosine (oQ-tRNA). This is S-adenosylmethionine:tRNA ribosyltransferase-isomerase from Staphylococcus haemolyticus (strain JCSC1435).